The following is a 586-amino-acid chain: Non-structural glycoprotein GNS (586 aa).

The first 14 residues, 1 to 14, serve as a signal peptide directing secretion; it reads MFLQLFNIVLIYGV. Over 15–544 the chain is Extracellular; sequence RTSQSTWINY…QNKEYWNEES (530 aa). N-linked (GlcNAc...) asparagine; by host glycans are attached at residues Asn-27, Asn-68, Asn-274, Asn-350, Asn-383, Asn-476, Asn-501, and Asn-521. A helical membrane pass occupies residues 545 to 562; that stretch reads SIWGISTIITVLGIYYIY. The Cytoplasmic segment spans residues 563–586; the sequence is RKNRREKIFLNMKHRVQRFFKLDY.

The protein belongs to the ephemerovirus glycoprotein family.

Its subcellular location is the host membrane. This chain is Non-structural glycoprotein GNS (GNS), found in Bos taurus (Bovine).